A 92-amino-acid polypeptide reads, in one-letter code: Small ribosomal subunit protein uS19c (92 aa).

Belongs to the universal ribosomal protein uS19 family.

The protein resides in the plastid. It localises to the chloroplast. Protein S19 forms a complex with S13 that binds strongly to the 16S ribosomal RNA. This chain is Small ribosomal subunit protein uS19c, found in Lemna minor (Common duckweed).